Here is a 179-residue protein sequence, read N- to C-terminus: UPF0134 protein MPN_145 (179 aa).

Belongs to the UPF0134 family.

The sequence is that of UPF0134 protein MPN_145 from Mycoplasma pneumoniae (strain ATCC 29342 / M129 / Subtype 1) (Mycoplasmoides pneumoniae).